A 208-amino-acid polypeptide reads, in one-letter code: Protein GrpE (208 aa).

Over residues 1 to 25 the composition is skewed to basic and acidic residues; that stretch reads MVDNKDFNEELKENIQEELDNETKA. The tract at residues 1–38 is disordered; the sequence is MVDNKDFNEELKENIQEELDNETKAENPNIDEEVEEVS. Residues 29–38 are compositionally biased toward acidic residues; sequence NIDEEVEEVS.

This sequence belongs to the GrpE family. Homodimer.

It is found in the cytoplasm. In terms of biological role, participates actively in the response to hyperosmotic and heat shock by preventing the aggregation of stress-denatured proteins, in association with DnaK and GrpE. It is the nucleotide exchange factor for DnaK and may function as a thermosensor. Unfolded proteins bind initially to DnaJ; upon interaction with the DnaJ-bound protein, DnaK hydrolyzes its bound ATP, resulting in the formation of a stable complex. GrpE releases ADP from DnaK; ATP binding to DnaK triggers the release of the substrate protein, thus completing the reaction cycle. Several rounds of ATP-dependent interactions between DnaJ, DnaK and GrpE are required for fully efficient folding. This chain is Protein GrpE, found in Clostridium perfringens (strain 13 / Type A).